A 499-amino-acid chain; its full sequence is uncharacterized protein (499 aa).

This is an uncharacterized protein from Metamycoplasma hominis (strain ATCC 23114 / DSM 25592 / NBRC 14850 / NCTC 10111 / PG21) (Mycoplasma hominis).